The sequence spans 302 residues: Short-chain dehydrogenase/reductase 3 (302 aa).

4 helical membrane-spanning segments follow: residues 9 to 29 (LVVF…GLVL), 170 to 190 (IVCL…DYCT), 195 to 215 (AFAF…VSAT), and 253 to 273 (AVQL…LIIL). Ser175 serves as a coordination point for substrate. Tyr188 serves as the catalytic Proton acceptor.

The protein belongs to the short-chain dehydrogenases/reductases (SDR) family. In terms of tissue distribution, in the retina, expressed in cone but not rod outer segments.

It localises to the membrane. The catalysed reaction is all-trans-retinol + NADP(+) = all-trans-retinal + NADPH + H(+). Catalyzes the reduction of all-trans-retinal to all-trans-retinol in the presence of NADPH. This chain is Short-chain dehydrogenase/reductase 3 (DHRS3), found in Bos taurus (Bovine).